A 698-amino-acid chain; its full sequence is Vertnin (698 aa).

Belongs to the vertnin family.

Its subcellular location is the nucleus. Acts as a transcription factor that regulates development of thoracic vertebrae. This chain is Vertnin (VRTN), found in Sus scrofa (Pig).